Here is a 148-residue protein sequence, read N- to C-terminus: Putative antiporter subunit mnhG2 (148 aa).

The next 3 membrane-spanning stretches (helical) occupy residues 11-31 (IAAIMIFLGSIIALISSIGLI), 51-71 (VLLTLVGVIIFFISSQGYLSV), and 72-92 (RLILALVFINLTSPVGGHLIS). Positions 125 to 148 (EQLKQRAHEREERRRKTYEKEHDY) are disordered. Positions 127–148 (LKQRAHEREERRRKTYEKEHDY) are enriched in basic and acidic residues.

It belongs to the CPA3 antiporters (TC 2.A.63) subunit G family. As to quaternary structure, may form a heterooligomeric complex that consists of seven subunits: mnhA2, mnhB2, mnhC2, mnhD2, mnhE2, mnhF2 and mnhG2.

The protein localises to the cell membrane. This Staphylococcus saprophyticus subsp. saprophyticus (strain ATCC 15305 / DSM 20229 / NCIMB 8711 / NCTC 7292 / S-41) protein is Putative antiporter subunit mnhG2 (mnhG2).